Reading from the N-terminus, the 470-residue chain is FAD-dependent monooxygenase SAT7 (470 aa).

Residues 28-48 traverse the membrane as a helical segment; the sequence is GLSVAIVGGGIVGIALALGLV. The FAD site is built by Glu58, Ala71, and Arg143. Residues Arg227 and Tyr260 contribute to the active site. FAD is bound by residues Asp351 and Ala364.

The protein belongs to the paxM FAD-dependent monooxygenase family. FAD is required as a cofactor.

The protein resides in the membrane. Its pathway is mycotoxin biosynthesis. In terms of biological role, FAD-dependent monooxygenase; part of the satratoxin SC1 cluster involved in the biosynthesis of satratoxins, trichothecene mycotoxins that are associated with human food poisonings. Satratoxins are suggested to be made by products of multiple gene clusters (SC1, SC2 and SC3) that encode 21 proteins in all, including polyketide synthases, acetyltransferases, and other enzymes expected to modify the trichothecene skeleton. SC1 encodes 10 proteins, SAT1 to SAT10. The largest are SAT8, which encodes a putative polyketide synthase (PKS) with a conventional non-reducing architecture, and SAT10, a putative protein containing four ankyrin repeats and thus may be involved in protein scaffolding. The putative short-chain reductase SAT3 may assist the PKS in some capacity. SAT6 contains a secretory lipase domain and acts probably as a trichothecene esterase. SAT5 encodes a putative acetyltransferase, and so, with SAT6, may affect endogenous protection from toxicity. The probable transcription factor SAT9 may regulate the expression of the SC1 cluster. SC2 encodes proteins SAT11 to SAT16, the largest of which encodes the putative reducing PKS SAT13. SAT11 is a cytochrome P450 monooxygenase, while SAT14 and SAT16 are probable acetyltransferases. The SC2 cluster may be regulated by the transcription factor SAT15. SC3 is a small cluster that encodes 5 proteins, SAT17 to SAT21. SAT21 is a putative MFS-type transporter which may have a role in exporting secondary metabolites. The four other proteins putatively encoded in SC3 include the taurine hydroxylase-like protein SAT17, the O-methyltransferase SAT18, the acetyltransferase SAT19, and the Cys6-type zinc finger SAT20, the latter being probably involved in regulation of SC3 expression. The sequence is that of FAD-dependent monooxygenase SAT7 from Stachybotrys chartarum (strain CBS 109288 / IBT 7711) (Toxic black mold).